We begin with the raw amino-acid sequence, 224 residues long: uncharacterized protein (224 aa).

The ABC transporter domain occupies 2 to 221 (IEAKNVWKIY…KLRDGEIVEI (220 aa)). 38-45 (GPSGCGKS) lines the ATP pocket.

Belongs to the ABC transporter superfamily.

This is an uncharacterized protein from Methanocaldococcus jannaschii (strain ATCC 43067 / DSM 2661 / JAL-1 / JCM 10045 / NBRC 100440) (Methanococcus jannaschii).